We begin with the raw amino-acid sequence, 97 residues long: Aspartyl/glutamyl-tRNA(Asn/Gln) amidotransferase subunit C (97 aa).

It belongs to the GatC family. In terms of assembly, heterotrimer of A, B and C subunits.

The catalysed reaction is L-glutamyl-tRNA(Gln) + L-glutamine + ATP + H2O = L-glutaminyl-tRNA(Gln) + L-glutamate + ADP + phosphate + H(+). The enzyme catalyses L-aspartyl-tRNA(Asn) + L-glutamine + ATP + H2O = L-asparaginyl-tRNA(Asn) + L-glutamate + ADP + phosphate + 2 H(+). In terms of biological role, allows the formation of correctly charged Asn-tRNA(Asn) or Gln-tRNA(Gln) through the transamidation of misacylated Asp-tRNA(Asn) or Glu-tRNA(Gln) in organisms which lack either or both of asparaginyl-tRNA or glutaminyl-tRNA synthetases. The reaction takes place in the presence of glutamine and ATP through an activated phospho-Asp-tRNA(Asn) or phospho-Glu-tRNA(Gln). The polypeptide is Aspartyl/glutamyl-tRNA(Asn/Gln) amidotransferase subunit C (Thermosynechococcus vestitus (strain NIES-2133 / IAM M-273 / BP-1)).